A 149-amino-acid polypeptide reads, in one-letter code: Large-conductance mechanosensitive channel (149 aa).

2 helical membrane passes run 8 to 28 (FIMR…SAFT) and 74 to 94 (IGSV…LFLI).

The protein belongs to the MscL family. As to quaternary structure, homopentamer.

It is found in the cell membrane. Its function is as follows. Channel that opens in response to stretch forces in the membrane lipid bilayer. May participate in the regulation of osmotic pressure changes within the cell. The protein is Large-conductance mechanosensitive channel of Enterococcus faecalis (strain ATCC 700802 / V583).